A 222-amino-acid polypeptide reads, in one-letter code: uncharacterized protein (222 aa).

This is an uncharacterized protein from Methanocaldococcus jannaschii (strain ATCC 43067 / DSM 2661 / JAL-1 / JCM 10045 / NBRC 100440) (Methanococcus jannaschii).